A 465-amino-acid chain; its full sequence is Protein unc-93 homolog A (465 aa).

5 helical membrane-spanning segments follow: residues 8-28, 40-60, 71-91, 96-118, and 140-160; these read VLVV…LQSL, VISL…LPPI, IVVS…PGWA, TSAI…LTIS, and IFFF…SLIF. N-linked (GlcNAc...) asparagine glycosylation is found at Asn-183 and Asn-189. The chain crosses the membrane as a helical span at residues 200 to 220; that stretch reads TLLGCYIGVGLLAIIFVAVFL. N-linked (GlcNAc...) asparagine glycosylation occurs at Asn-237. 5 helical membrane-spanning segments follow: residues 256 to 276, 281 to 301, 319 to 339, 343 to 363, and 410 to 427; these read LLLL…LSGE, YVTC…FAAS, IALF…LLYW, PDQL…DAVW, and IYIA…YLYV.

This sequence belongs to the unc-93 family.

The protein localises to the membrane. The protein is Protein unc-93 homolog A (unc93a) of Danio rerio (Zebrafish).